A 221-amino-acid polypeptide reads, in one-letter code: Phosphoribosylformylglycinamidine synthase subunit PurQ (221 aa).

The region spanning 8-221 (NVGIIRFPGT…GLKFFKSFLD (214 aa)) is the Glutamine amidotransferase type-1 domain. Residue C91 is the Nucleophile of the active site. Active-site residues include H198 and E200.

Part of the FGAM synthase complex composed of 1 PurL, 1 PurQ and 2 PurS subunits.

The protein resides in the cytoplasm. The enzyme catalyses N(2)-formyl-N(1)-(5-phospho-beta-D-ribosyl)glycinamide + L-glutamine + ATP + H2O = 2-formamido-N(1)-(5-O-phospho-beta-D-ribosyl)acetamidine + L-glutamate + ADP + phosphate + H(+). The catalysed reaction is L-glutamine + H2O = L-glutamate + NH4(+). The protein operates within purine metabolism; IMP biosynthesis via de novo pathway; 5-amino-1-(5-phospho-D-ribosyl)imidazole from N(2)-formyl-N(1)-(5-phospho-D-ribosyl)glycinamide: step 1/2. Its function is as follows. Part of the phosphoribosylformylglycinamidine synthase complex involved in the purines biosynthetic pathway. Catalyzes the ATP-dependent conversion of formylglycinamide ribonucleotide (FGAR) and glutamine to yield formylglycinamidine ribonucleotide (FGAM) and glutamate. The FGAM synthase complex is composed of three subunits. PurQ produces an ammonia molecule by converting glutamine to glutamate. PurL transfers the ammonia molecule to FGAR to form FGAM in an ATP-dependent manner. PurS interacts with PurQ and PurL and is thought to assist in the transfer of the ammonia molecule from PurQ to PurL. This is Phosphoribosylformylglycinamidine synthase subunit PurQ from Methanosphaera stadtmanae (strain ATCC 43021 / DSM 3091 / JCM 11832 / MCB-3).